A 616-amino-acid polypeptide reads, in one-letter code: Chaperone protein HscA (616 aa).

Belongs to the heat shock protein 70 family.

Chaperone involved in the maturation of iron-sulfur cluster-containing proteins. Has a low intrinsic ATPase activity which is markedly stimulated by HscB. Involved in the maturation of IscU. This is Chaperone protein HscA from Escherichia coli O6:H1 (strain CFT073 / ATCC 700928 / UPEC).